A 171-amino-acid polypeptide reads, in one-letter code: ATP synthase subunit b (171 aa).

Residues 13–33 (GVEWGTTFVTLVTFVILIILL) traverse the membrane as a helical segment.

The protein belongs to the ATPase B chain family. F-type ATPases have 2 components, F(1) - the catalytic core - and F(0) - the membrane proton channel. F(1) has five subunits: alpha(3), beta(3), gamma(1), delta(1), epsilon(1). F(0) has three main subunits: a(1), b(2) and c(10-14). The alpha and beta chains form an alternating ring which encloses part of the gamma chain. F(1) is attached to F(0) by a central stalk formed by the gamma and epsilon chains, while a peripheral stalk is formed by the delta and b chains.

The protein resides in the cell membrane. Functionally, f(1)F(0) ATP synthase produces ATP from ADP in the presence of a proton or sodium gradient. F-type ATPases consist of two structural domains, F(1) containing the extramembraneous catalytic core and F(0) containing the membrane proton channel, linked together by a central stalk and a peripheral stalk. During catalysis, ATP synthesis in the catalytic domain of F(1) is coupled via a rotary mechanism of the central stalk subunits to proton translocation. In terms of biological role, component of the F(0) channel, it forms part of the peripheral stalk, linking F(1) to F(0). This Staphylococcus epidermidis (strain ATCC 12228 / FDA PCI 1200) protein is ATP synthase subunit b.